Here is a 133-residue protein sequence, read N- to C-terminus: Putative pre-16S rRNA nuclease (133 aa).

Belongs to the YqgF nuclease family.

The protein resides in the cytoplasm. In terms of biological role, could be a nuclease involved in processing of the 5'-end of pre-16S rRNA. In Bordetella pertussis (strain Tohama I / ATCC BAA-589 / NCTC 13251), this protein is Putative pre-16S rRNA nuclease.